Reading from the N-terminus, the 189-residue chain is MQVQCNEKAFKGGFIINSQIATAPPKTLDTTITIGKPTVEDGAAMWELVNKSTLDTNSPYKYIMMCEYFAETCVVAKENERLVGFVTAFIPPEHQDVIFVWQIGVDSSQRGKGLASKLLQELISRDICSNVNYVEATVTPSNKASQALFQKLAREYNTQCEVSECFSEDLFPGDDHEAELTFRIGPLHP.

The 152-residue stretch at 32 to 183 folds into the N-acetyltransferase domain; the sequence is ITIGKPTVED…DDHEAELTFR (152 aa).

The protein belongs to the acetyltransferase family. EctA subfamily.

It carries out the reaction L-2,4-diaminobutanoate + acetyl-CoA = (2S)-4-acetamido-2-aminobutanoate + CoA + H(+). The protein operates within amine and polyamine biosynthesis; ectoine biosynthesis; L-ectoine from L-aspartate 4-semialdehyde: step 2/3. Catalyzes the acetylation of L-2,4-diaminobutyrate (DABA) to gamma-N-acetyl-alpha,gamma-diaminobutyric acid (ADABA) with acetyl coenzyme A. In Halalkalibacterium halodurans (strain ATCC BAA-125 / DSM 18197 / FERM 7344 / JCM 9153 / C-125) (Bacillus halodurans), this protein is L-2,4-diaminobutyric acid acetyltransferase (ectA).